The chain runs to 64 residues: Beta-insect excitatory toxin OdTx12 (64 aa).

The LCN-type CS-alpha/beta domain occupies 1–59 (QSTGGKAPECLLSNYCNNECTKVHYADKGYCCLLSCYCFGLSDDKKVLEISDSRKKYCD). 4 disulfides stabilise this stretch: cysteine 10-cysteine 31, cysteine 16-cysteine 36, cysteine 20-cysteine 38, and cysteine 32-cysteine 58.

Belongs to the long (4 C-C) scorpion toxin superfamily. Sodium channel inhibitor family. Beta subfamily. As to expression, expressed by the venom gland.

The protein resides in the secreted. Its function is as follows. Excitatory insect beta-toxins induce a spastic paralysis. They bind voltage-independently at site-4 of sodium channels (Nav) and shift the voltage of activation toward more negative potentials thereby affecting sodium channel activation and promoting spontaneous and repetitive firing. In vivo, this recombinant protein is lethal to Locusta migratoria larvae after injection, but has no significant effect when orally administered. Is not toxic to mice after intracerebroventricular injection. The protein is Beta-insect excitatory toxin OdTx12 of Odontobuthus doriae (Yellow Iranian scorpion).